We begin with the raw amino-acid sequence, 276 residues long: Large ribosomal subunit protein uL2 (276 aa).

The interval Ala224 to Lys276 is disordered. Residues Lys254–Lys276 are compositionally biased toward basic residues.

The protein belongs to the universal ribosomal protein uL2 family. As to quaternary structure, part of the 50S ribosomal subunit. Forms a bridge to the 30S subunit in the 70S ribosome.

Its function is as follows. One of the primary rRNA binding proteins. Required for association of the 30S and 50S subunits to form the 70S ribosome, for tRNA binding and peptide bond formation. It has been suggested to have peptidyltransferase activity; this is somewhat controversial. Makes several contacts with the 16S rRNA in the 70S ribosome. This is Large ribosomal subunit protein uL2 from Solidesulfovibrio magneticus (strain ATCC 700980 / DSM 13731 / RS-1) (Desulfovibrio magneticus).